The following is a 270-amino-acid chain: Mediator of RNA polymerase II transcription subunit 4 (270 aa).

The disordered stretch occupies residues methionine 1–glycine 22. At alanine 2 the chain carries N-acetylalanine. 2 coiled-coil regions span residues asparagine 24 to leucine 48 and histidine 90 to lysine 131. Position 32 is a phosphoserine (serine 32). Residues aspartate 226–aspartate 270 form a disordered region. Over residues serine 259–aspartate 270 the composition is skewed to low complexity.

The protein belongs to the Mediator complex subunit 4 family. As to quaternary structure, component of the Mediator complex, which is composed of MED1, MED4, MED6, MED7, MED8, MED9, MED10, MED11, MED12, MED13, MED13L, MED14, MED15, MED16, MED17, MED18, MED19, MED20, MED21, MED22, MED23, MED24, MED25, MED26, MED27, MED29, MED30, MED31, CCNC, CDK8 and CDC2L6/CDK11. The MED12, MED13, CCNC and CDK8 subunits form a distinct module termed the CDK8 module. Mediator containing the CDK8 module is less active than Mediator lacking this module in supporting transcriptional activation. Individual preparations of the Mediator complex lacking one or more distinct subunits have been variously termed ARC, CRSP, DRIP, PC2, SMCC and TRAP.

Its subcellular location is the nucleus. Component of the Mediator complex, a coactivator involved in the regulated transcription of nearly all RNA polymerase II-dependent genes. Mediator functions as a bridge to convey information from gene-specific regulatory proteins to the basal RNA polymerase II transcription machinery. Mediator is recruited to promoters by direct interactions with regulatory proteins and serves as a scaffold for the assembly of a functional preinitiation complex with RNA polymerase II and the general transcription factors. The chain is Mediator of RNA polymerase II transcription subunit 4 (MED4) from Homo sapiens (Human).